Reading from the N-terminus, the 207-residue chain is Small ribosomal subunit protein uS2 (207 aa).

This sequence belongs to the universal ribosomal protein uS2 family.

The chain is Small ribosomal subunit protein uS2 from Methanocella arvoryzae (strain DSM 22066 / NBRC 105507 / MRE50).